We begin with the raw amino-acid sequence, 494 residues long: Chromosomal replication initiator protein DnaA (494 aa).

The segment at 1 to 103 (MTTDPDPPFV…PVSDESDSGS (103 aa)) is domain I, interacts with DnaA modulators. The tract at residues 94–117 (PVSDESDSGSVASPAPVAAADPDD) is disordered. Residues 101-113 (SGSVASPAPVAAA) show a composition bias toward low complexity. Positions 104-153 (VASPAPVAAADPDDDVVDDDLAARASAEESWPSYFTNRANRAAEDDATSV) are domain II. Residues 154–370 (NLNRRYTFDT…GALIRVTAFA (217 aa)) are domain III, AAA+ region. Gly198, Gly200, Lys201, and Thr202 together coordinate ATP. The interval 371–494 (SLNKTPIDKS…TTRIRQRAKR (124 aa)) is domain IV, binds dsDNA.

It belongs to the DnaA family. In terms of assembly, oligomerizes as a right-handed, spiral filament on DNA at oriC.

Its subcellular location is the cytoplasm. Plays an essential role in the initiation and regulation of chromosomal replication. ATP-DnaA binds to the origin of replication (oriC) to initiate formation of the DNA replication initiation complex once per cell cycle. Binds the DnaA box (a 9 base pair repeat at the origin) and separates the double-stranded (ds)DNA. Forms a right-handed helical filament on oriC DNA; dsDNA binds to the exterior of the filament while single-stranded (ss)DNA is stabiized in the filament's interior. The ATP-DnaA-oriC complex binds and stabilizes one strand of the AT-rich DNA unwinding element (DUE), permitting loading of DNA polymerase. After initiation quickly degrades to an ADP-DnaA complex that is not apt for DNA replication. Binds acidic phospholipids. The polypeptide is Chromosomal replication initiator protein DnaA (Mycolicibacterium vanbaalenii (strain DSM 7251 / JCM 13017 / BCRC 16820 / KCTC 9966 / NRRL B-24157 / PYR-1) (Mycobacterium vanbaalenii)).